Consider the following 336-residue polypeptide: N-lysine methyltransferase KMT5A-B (336 aa).

Disordered stretches follow at residues 1 to 107 and 141 to 165; these read MGRG…SSKQ and QSQK…NRKL. Basic and acidic residues predominate over residues 67–93; the sequence is SVAHHESKNLGKPTTETRKKAEVEKKR. Residues 95 to 104 are compositionally biased toward polar residues; it reads SSATELSVKS. Positions 146-162 are enriched in basic residues; it reads VKNKSQRRKAQRKKSPN. The region spanning 200-321 is the SET domain; it reads DGMKMDMIIG…VGEELLYDYG (122 aa). S-adenosyl-L-methionine is bound by residues 210–212, Tyr-255, and 282–283; these read KGR and NH.

The protein belongs to the class V-like SAM-binding methyltransferase superfamily. Histone-lysine methyltransferase family. PR/SET subfamily. In terms of processing, phosphorylated during mitosis.

It localises to the nucleus. The protein resides in the chromosome. The enzyme catalyses L-lysyl(20)-[histone H4] + S-adenosyl-L-methionine = N(6)-methyl-L-lysyl(20)-[histone H4] + S-adenosyl-L-homocysteine + H(+). It catalyses the reaction L-lysyl-[protein] + S-adenosyl-L-methionine = N(6)-methyl-L-lysyl-[protein] + S-adenosyl-L-homocysteine + H(+). Functionally, protein-lysine N-methyltransferase that monomethylates both histones and non-histone proteins. Specifically monomethylates 'Lys-20' of histone H4 (H4K20me1). H4K20me1 is enriched during mitosis and represents a specific tag for epigenetic transcriptional repression. Mainly functions in euchromatin regions, thereby playing a central role in the silencing of euchromatic genes. Required for cell proliferation, probably by contributing to the maintenance of proper higher-order structure of DNA during mitosis. Involved in chromosome condensation and proper cytokinesis. This is N-lysine methyltransferase KMT5A-B from Xenopus laevis (African clawed frog).